Consider the following 246-residue polypeptide: UDP-2,3-diacylglucosamine hydrolase (246 aa).

Mn(2+) is bound by residues Asp8, His10, Asp41, Asn79, and His114. 79–80 (NR) provides a ligand contact to substrate. Substrate contacts are provided by Asp122, Ser160, Asn164, Lys167, and His195. Mn(2+) contacts are provided by His195 and His197.

Belongs to the LpxH family. Mn(2+) serves as cofactor.

The protein localises to the cell inner membrane. The catalysed reaction is UDP-2-N,3-O-bis[(3R)-3-hydroxytetradecanoyl]-alpha-D-glucosamine + H2O = 2-N,3-O-bis[(3R)-3-hydroxytetradecanoyl]-alpha-D-glucosaminyl 1-phosphate + UMP + 2 H(+). The protein operates within glycolipid biosynthesis; lipid IV(A) biosynthesis; lipid IV(A) from (3R)-3-hydroxytetradecanoyl-[acyl-carrier-protein] and UDP-N-acetyl-alpha-D-glucosamine: step 4/6. In terms of biological role, hydrolyzes the pyrophosphate bond of UDP-2,3-diacylglucosamine to yield 2,3-diacylglucosamine 1-phosphate (lipid X) and UMP by catalyzing the attack of water at the alpha-P atom. Involved in the biosynthesis of lipid A, a phosphorylated glycolipid that anchors the lipopolysaccharide to the outer membrane of the cell. In Chromohalobacter salexigens (strain ATCC BAA-138 / DSM 3043 / CIP 106854 / NCIMB 13768 / 1H11), this protein is UDP-2,3-diacylglucosamine hydrolase.